We begin with the raw amino-acid sequence, 1498 residues long: ATP-binding cassette sub-family C member 6 (1498 aa).

Residues 1–37 (MNRGRSMATPGEQCAGLRVWNQTEQEPAAYHLLSLCF) lie on the Extracellular side of the membrane. An N-linked (GlcNAc...) asparagine glycan is attached at Asn21. The chain crosses the membrane as a helical span at residues 38–58 (VRAASSWVPPMYLWVLGPIYL). Residues 59–78 (LYIHRHGRCYLRMSHLFKTK) are Cytoplasmic-facing. The chain crosses the membrane as a helical span at residues 79-99 (MVLGLALILLYTFNVAVPLWR). The Extracellular segment spans residues 100 to 104 (IHQGV). A helical membrane pass occupies residues 105 to 125 (PQAPELLIHPTVWLTTMSFAT). Residues 126-137 (FLIHMERRKGVR) are Cytoplasmic-facing. A helical transmembrane segment spans residues 138 to 155 (SSGVLFGYWLLCCILPGI). The Extracellular portion of the chain corresponds to 156–173 (NTVQQASAGNFRQEPLHH). The chain crosses the membrane as a helical span at residues 174 to 194 (LATYLCLSLVVAELVLSCLVD). The Cytoplasmic segment spans residues 195–300 (QPPFFSEDSQ…RSQRGPLLRA (106 aa)). Residues 301–321 (IWRVFRSTFLLGTLSLVISDA) traverse the membrane as a helical segment. An ABC transmembrane type-1 1 domain is found at 309 to 592 (FLLGTLSLVI…LPFSVHCIVQ (284 aa)). Residues 322-347 (FRFAVPKLLSLFLEFMGDRNSSAWTG) are Extracellular-facing. Residue Asn341 is glycosylated (N-linked (GlcNAc...) asparagine). The helical transmembrane segment at 348–368 (WLLAVLMFAAACLQTLFEQQH) threads the bilayer. At 369–424 (MYRAKVLQMRLRTAITGLVYRKVLVLSSGSRKSSAAGDVVNLVSVDIQRLAESIIY) the chain is on the cytoplasmic side. The chain crosses the membrane as a helical span at residues 425-445 (LNGLWLLFLWIFVCFVYLWQL). Topologically, residues 446–448 (LGP) are extracellular. Residues 449–469 (SALTAVAVFLSLLPLNFFITK) form a helical membrane-spanning segment. The Cytoplasmic portion of the chain corresponds to 470–531 (KRGFHQEEQM…ALKTSTLLFS (62 aa)). The chain crosses the membrane as a helical span at residues 532–552 (VSLVSFQVSTFLVALVVFAVH). Over 553–574 (TLVAEDNAMDAEKAFVTLTVLS) the chain is Extracellular. A helical membrane pass occupies residues 575–595 (ILNKAQAFLPFSVHCIVQARV). Residues 596 to 934 (SFDRLAAFLC…VKTTIYLSYL (339 aa)) lie on the Cytoplasmic side of the membrane. The ABC transporter 1 domain maps to 627 to 851 (ISVHNGTFAW…NGALVGLLDG (225 aa)). Residue 661-668 (GPVGAGKS) participates in ATP binding. The segment at 855–910 (PAGTHDAATSDDLGGFPGGGRPTCRPDRPRPTEAAPVKGRSTSEVQMEASLDDPEA) is disordered. The chain crosses the membrane as a helical span at residues 935–955 (RAVGTPLCTYTLFLFLCQQVA). Positions 942–1223 (CTYTLFLFLC…VVRSWTDLEN (282 aa)) constitute an ABC transmembrane type-1 2 domain. Residues 956–992 (SFSQGYWLSLWADDPVVDGRQMHAALRGWVFGLLGCL) are Extracellular-facing. A helical transmembrane segment spans residues 993–1013 (QAIGLFASMAAVFLGGARASG). Over 1014–1056 (LLFRSLLWDVARSPIGFFERTPVGNLLNRFSKETDTVDVDIPD) the chain is Cytoplasmic. Residues 1057–1077 (KLRSLLTYAFGLLEVGLAVTM) traverse the membrane as a helical segment. Ala1078 is a topological domain (extracellular). Residues 1079-1099 (TPLAIVAILPLMVLYAGFQSL) traverse the membrane as a helical segment. The Cytoplasmic segment spans residues 1100 to 1170 (YVATSCQLRR…VADRWLATNL (71 aa)). The chain crosses the membrane as a helical span at residues 1171 to 1191 (ELLGNGLVFVAATCAVLSKAH). Residues 1192-1193 (LS) are Extracellular-facing. A helical transmembrane segment spans residues 1194-1214 (AGLVGFSVSAALQVTQTLQWV). Residues 1215–1498 (VRSWTDLENS…YRLAHESGLA (284 aa)) lie on the Cytoplasmic side of the membrane. One can recognise an ABC transporter 2 domain in the interval 1260–1494 (IEFRDFGLRH…KGLFYRLAHE (235 aa)). Phosphoserine is present on Ser1281. Position 1294 to 1301 (1294 to 1301 (GRTGAGKS)) interacts with ATP.

This sequence belongs to the ABC transporter superfamily. ABCC family. Conjugate transporter (TC 3.A.1.208) subfamily. Post-translationally, glycosylated.

Its subcellular location is the basolateral cell membrane. The protein resides in the basal cell membrane. It carries out the reaction an S-substituted glutathione(in) + ATP + H2O = an S-substituted glutathione(out) + ADP + phosphate + H(+). The enzyme catalyses leukotriene C4(in) + ATP + H2O = leukotriene C4(out) + ADP + phosphate + H(+). Functionally, ATP-dependent transporter of the ATP-binding cassette (ABC) family that actively extrudes physiological compounds, and xenobiotics from cells. Mediates ATP-dependent transport of glutathione conjugates such as leukotriene-c4 (LTC4) and N-ethylmaleimide S-glutathione (NEM-GS) (in vitro), and an anionic cyclopentapeptide endothelin antagonist, BQ-123. May contribute to regulate the transport of organic compounds in testes across the blood-testis-barrier. Its function is as follows. Mediates the release of nucleoside triphosphates, predominantly ATP, into the circulation, where it is rapidly converted into AMP and the mineralization inhibitor inorganic pyrophosphate (PPi) by the ecto-enzyme ectonucleotide pyrophosphatase phosphodiesterase 1 (ENPP1), therefore playing a role in PPi homeostasis. This Mus musculus (Mouse) protein is ATP-binding cassette sub-family C member 6 (Abcc6).